The sequence spans 42 residues: Large ribosomal subunit protein bL34c (42 aa).

It belongs to the bacterial ribosomal protein bL34 family.

It localises to the plastid. It is found in the chloroplast. This Olisthodiscus luteus (Marine phytoflagellate) protein is Large ribosomal subunit protein bL34c (rpl34).